A 906-amino-acid polypeptide reads, in one-letter code: Protein translocase subunit SecA (906 aa).

ATP-binding positions include Gln-87, 105 to 109 (GEGKT), and Asp-512. Residues 839–896 (LEEQQRQQSEAAPRTYTHATAESQLADEEAAGEEGHTTFVRDEQKIGRNDPCPCGSGK) form a disordered region. Over residues 871–886 (EEGHTTFVRDEQKIGR) the composition is skewed to basic and acidic residues. 4 residues coordinate Zn(2+): Cys-890, Cys-892, Cys-901, and His-902.

It belongs to the SecA family. Monomer and homodimer. Part of the essential Sec protein translocation apparatus which comprises SecA, SecYEG and auxiliary proteins SecDF-YajC and YidC. It depends on Zn(2+) as a cofactor.

Its subcellular location is the cell inner membrane. The protein resides in the cytoplasm. It carries out the reaction ATP + H2O + cellular proteinSide 1 = ADP + phosphate + cellular proteinSide 2.. Its function is as follows. Part of the Sec protein translocase complex. Interacts with the SecYEG preprotein conducting channel. Has a central role in coupling the hydrolysis of ATP to the transfer of proteins into and across the cell membrane, serving both as a receptor for the preprotein-SecB complex and as an ATP-driven molecular motor driving the stepwise translocation of polypeptide chains across the membrane. The chain is Protein translocase subunit SecA from Aeromonas salmonicida (strain A449).